The sequence spans 99 residues: Large ribosomal subunit protein bL28 (99 aa).

The protein belongs to the bacterial ribosomal protein bL28 family.

The polypeptide is Large ribosomal subunit protein bL28 (Brucella anthropi (strain ATCC 49188 / DSM 6882 / CCUG 24695 / JCM 21032 / LMG 3331 / NBRC 15819 / NCTC 12168 / Alc 37) (Ochrobactrum anthropi)).